The chain runs to 286 residues: Putative electron transfer flavoprotein subunit YgcQ (286 aa).

Valine 225–aspartate 253 contributes to the FAD binding site.

It belongs to the ETF alpha-subunit/FixB family. As to quaternary structure, ygcQ and YgcR form a heterodimer.

Its function is as follows. May play a role in a redox process. In Escherichia coli (strain K12), this protein is Putative electron transfer flavoprotein subunit YgcQ (ygcQ).